The primary structure comprises 325 residues: Dimethylsulfide dehydrogenase subunit beta (325 aa).

3 consecutive 4Fe-4S ferredoxin-type domains span residues Ile-6–Arg-35, Ser-123–Glu-154, and Gly-156–Gln-185. [4Fe-4S] cluster-binding residues include Cys-15, Cys-18, Cys-21, Cys-25, Cys-132, Cys-135, and Cys-140. [3Fe-4S] cluster contacts are provided by Cys-144, Cys-165, and Cys-171. [4Fe-4S] cluster-binding residues include Cys-175, Cys-192, Cys-195, Cys-207, and Cys-211.

Heterotrimer of alpha, beta and gamma subunits. The cofactor is [3Fe-4S] cluster. [4Fe-4S] cluster serves as cofactor.

It localises to the periplasm. Electron transfer subunit of the dehydrogenase during anaerobic growth on dimethyl sulfide. The polypeptide is Dimethylsulfide dehydrogenase subunit beta (ddhB) (Rhodovulum sulfidophilum (Rhodobacter sulfidophilus)).